A 160-amino-acid polypeptide reads, in one-letter code: Phosphopantetheine adenylyltransferase (160 aa).

Ser-10 serves as a coordination point for substrate. ATP contacts are provided by residues 10–11 (SF) and His-18. Residues Lys-42, Thr-74, and Arg-88 each coordinate substrate. ATP-binding positions include 89–91 (GLR), Glu-99, and 124–130 (YSFISST).

The protein belongs to the bacterial CoaD family. As to quaternary structure, homohexamer. It depends on Mg(2+) as a cofactor.

It is found in the cytoplasm. It carries out the reaction (R)-4'-phosphopantetheine + ATP + H(+) = 3'-dephospho-CoA + diphosphate. It participates in cofactor biosynthesis; coenzyme A biosynthesis; CoA from (R)-pantothenate: step 4/5. Reversibly transfers an adenylyl group from ATP to 4'-phosphopantetheine, yielding dephospho-CoA (dPCoA) and pyrophosphate. In Leptospira interrogans serogroup Icterohaemorrhagiae serovar copenhageni (strain Fiocruz L1-130), this protein is Phosphopantetheine adenylyltransferase.